We begin with the raw amino-acid sequence, 499 residues long: Cytochrome P450 705A12 (499 aa).

Residues 4–24 traverse the membrane as a helical segment; the sequence is LIIVDFQNISIFILLCLFSFL. Heme is bound at residue C439.

Belongs to the cytochrome P450 family. It depends on heme as a cofactor.

It localises to the membrane. May be involved in hydroxylation of the triterpene marneral. In Arabidopsis thaliana (Mouse-ear cress), this protein is Cytochrome P450 705A12.